The following is a 335-amino-acid chain: Probable peroxidase 26 (335 aa).

Residues 1-18 form the signal peptide; sequence MVMIHIFLTVMVVGGVSL. Disulfide bonds link C46–C122, C79–C84, C128–C331, and C205–C237. Residue R73 is part of the active site. Ca(2+)-binding residues include D78, V81, G83, D85, and S87. P168 lines the substrate pocket. Heme b is bound at residue H198. A Ca(2+)-binding site is contributed by S199. Residue N216 is glycosylated (N-linked (GlcNAc...) asparagine). Residues D255 and S258 each contribute to the Ca(2+) site. N259 and N273 each carry an N-linked (GlcNAc...) asparagine glycan.

This sequence belongs to the peroxidase family. Classical plant (class III) peroxidase subfamily. Requires heme b as cofactor. Ca(2+) serves as cofactor.

It localises to the secreted. The catalysed reaction is 2 a phenolic donor + H2O2 = 2 a phenolic radical donor + 2 H2O. In terms of biological role, removal of H(2)O(2), oxidation of toxic reductants, biosynthesis and degradation of lignin, suberization, auxin catabolism, response to environmental stresses such as wounding, pathogen attack and oxidative stress. The enzyme activity has to be proved. The polypeptide is Probable peroxidase 26 (PER26) (Arabidopsis thaliana (Mouse-ear cress)).